A 108-amino-acid chain; its full sequence is Nucleoid-associated protein BARBAKC583_1239 (108 aa).

It belongs to the YbaB/EbfC family. In terms of assembly, homodimer.

Its subcellular location is the cytoplasm. The protein resides in the nucleoid. In terms of biological role, binds to DNA and alters its conformation. May be involved in regulation of gene expression, nucleoid organization and DNA protection. The chain is Nucleoid-associated protein BARBAKC583_1239 from Bartonella bacilliformis (strain ATCC 35685 / KC583 / Herrer 020/F12,63).